A 970-amino-acid polypeptide reads, in one-letter code: MATCIGEKIEDFKVGNLLGKGSFAGVYRAESIHTGLEVAIKMIDKKAMYKAGMVQRVQNEVKIHCQLKHPSILELYNYFEDSNYVYLVLEMCHNGEMNRYLKNRVKPFSENEARHFMHQIITGMLYLHSHGILHRDLTLSNLLLTRNMNIKIADFGLATQLKMPHEKHYTLCGTPNYISPEIATRSAHGLESDVWSLGCMFYTLLIGRPPFDTDTVKNTLNKVVLADYEMPTFLSMEAKDLIHQLLRRNPADRLSLSSVLDHPFMSQNSSTKSKDLGTVEDSIDSGHATLSTAITASSSTSISGSLFDKRRLLIGQPLPNKMTVFPKNKSSSDFSSSGDGNSFYTQWGNQETSNSGRGRVIQDAEERPHSRYLRRAYSSDRSGTFNSPSQAKTYTMERCHSAEMLSMSKRSGGGENEERYSPTDNNANIFNFFKEKTSSSSGSFERPDNNQTLSNHLCPGKTPFPFADPTPQTETVQQWFGNLQINAHLRKTTEYDSISPTRDFQGHPDLQKDTSKNAWTDTKVKKNSDASDNAHSVKQPNTMKYMTALHSKPEIIQQECVFGSDPLSEQSKTRGMEPPLGYQNRTLRSITSPLVAHRLKPIRQKTKKAVVSILDSEEVCVELLKEYASQEYVKEVLQISSDGNMITIYYPNGGRGFPLADRPPSPTDNISRYSFDNLPEKYWRKYQYASRFVQLVRSKSPKITYFTRYAKCILMENSPGADFEVWFYDGVKIHKTEDFIQVIEKTGKSYTLKSESEVNSLKEEIKMYMDHANEGHRICLALESIISEEERKTRSAPFFPIIIGRKPGSTSSPKALSPPPSVDSNYPTRDRASFNRMVMHSAASPTQAPILNPSMVTNEGLGLTTTASGTDISSNSLKDCLPKSAQLLKSVFVKNVGWATQLTSGAVWVQFNDGSQLVVQAGVSSISYTSPNGQTTRYGENEKLPEYIKQKLQCLSSILLMFSNPTPNFH.

In terms of domain architecture, Protein kinase spans 12–265 (FKVGNLLGKG…LSSVLDHPFM (254 aa)). Residues 18–26 (LGKGSFAGV) and K41 each bind ATP. K45 and K46 each carry N6-acetyllysine. The active-site Proton acceptor is D136. The disordered stretch occupies residues 324–373 (VFPKNKSSSDFSSSGDGNSFYTQWGNQETSNSGRGRVIQDAEERPHSRYL). Over residues 327-343 (KNKSSSDFSSSGDGNSF) the composition is skewed to low complexity. The segment covering 344 to 356 (YTQWGNQETSNSG) has biased composition (polar residues). A compositionally biased stretch (basic and acidic residues) spans 360–369 (VIQDAEERPH). S401 carries the post-translational modification Phosphoserine. The interval 498-540 (ISPTRDFQGHPDLQKDTSKNAWTDTKVKKNSDASDNAHSVKQP) is disordered. Basic and acidic residues predominate over residues 504–515 (FQGHPDLQKDTS). Residues 530-540 (ASDNAHSVKQP) show a composition bias toward polar residues. The 114-residue stretch at 586-699 (TLRSITSPLV…SRFVQLVRSK (114 aa)) folds into the Cryptic POLO box 1 (CPB1) domain. At S665 the chain carries Phosphoserine. In terms of domain architecture, Cryptic POLO box 2 (CPB2) spans 700–813 (SPKITYFTRY…GRKPGSTSSP (114 aa)). The tract at residues 808-829 (GSTSSPKALSPPPSVDSNYPTR) is disordered. A Phosphoserine modification is found at S817. Residues 886-964 (QLLKSVFVKN…LSSILLMFSN (79 aa)) enclose the POLO box domain.

It belongs to the protein kinase superfamily. Ser/Thr protein kinase family. CDC5/Polo subfamily. Homodimer. Interacts with CEP152 (via N-terminus). Interacts with CEP78; this interaction may be important for proper PLK4 localization to the centriole and PLK4-induced overduplication of centrioles. Interacts with CEP131. Interacts simultaneously with TENT5C and CEP192. Interacts with TENT5C; this interaction leads to the TENT5C recruitment in the centrosome. Interacts with CEP85; this interaction may be important in cell migration and centriole assembly. In terms of processing, ubiquitinated; leading to its degradation by the proteasome. Deubiquitinated by USP54; leading to PLK4 stabilization. Tyrosine-phosphorylated by TEC. Post-translationally, acetylation by KAT2A and KAT2B impairs kinase activity by shifting the kinase to an inactive conformation.

Its subcellular location is the cytoplasm. The protein localises to the cytoskeleton. It localises to the microtubule organizing center. It is found in the centrosome. The protein resides in the centriole. Its subcellular location is the nucleus. The protein localises to the nucleolus. It localises to the cleavage furrow. It catalyses the reaction L-seryl-[protein] + ATP = O-phospho-L-seryl-[protein] + ADP + H(+). The catalysed reaction is L-threonyl-[protein] + ATP = O-phospho-L-threonyl-[protein] + ADP + H(+). Functionally, serine/threonine-protein kinase that plays a central role in centriole duplication. Able to trigger procentriole formation on the surface of the parental centriole cylinder, leading to the recruitment of centriole biogenesis proteins such as SASS6, CPAP, CCP110, CEP135 and gamma-tubulin. When overexpressed, it is able to induce centrosome amplification through the simultaneous generation of multiple procentrioles adjoining each parental centriole during S phase. Phosphorylates 'Ser-151' of FBXW5 during the G1/S transition, leading to inhibit FBXW5 ability to ubiquitinate SASS6. Its central role in centriole replication suggests a possible role in tumorigenesis, centrosome aberrations being frequently observed in tumors. Also involved in deuterosome-mediated centriole amplification in multiciliated that can generate more than 100 centrioles. Also involved in trophoblast differentiation by phosphorylating HAND1, leading to disrupt the interaction between HAND1 and MDFIC and activate HAND1. Phosphorylates CDC25C and CHEK2. Required for the recruitment of STIL to the centriole and for STIL-mediated centriole amplification. Phosphorylates CEP131 and PCM1 which is essential for proper organization and integrity of centriolar satellites. This chain is Serine/threonine-protein kinase PLK4, found in Pongo abelii (Sumatran orangutan).